We begin with the raw amino-acid sequence, 336 residues long: Ketol-acid reductoisomerase (NADP(+)) (336 aa).

Residues 3–183 form the KARI N-terminal Rossmann domain; that stretch reads ATMYYDRDVS…GGTRAGVLET (181 aa). NADP(+)-binding positions include 26–29, Arg-49, Ser-52, Ser-54, and 84–87; these read YGSQ and DETQ. His-109 is a catalytic residue. Gly-135 provides a ligand contact to NADP(+). In terms of domain architecture, KARI C-terminal knotted spans 184 to 329; the sequence is TFKEETETDL…RELRSKMPFI (146 aa). Positions 192, 196, 228, and 232 each coordinate Mg(2+). Ser-253 provides a ligand contact to substrate.

It belongs to the ketol-acid reductoisomerase family. The cofactor is Mg(2+).

It carries out the reaction (2R)-2,3-dihydroxy-3-methylbutanoate + NADP(+) = (2S)-2-acetolactate + NADPH + H(+). The enzyme catalyses (2R,3R)-2,3-dihydroxy-3-methylpentanoate + NADP(+) = (S)-2-ethyl-2-hydroxy-3-oxobutanoate + NADPH + H(+). It participates in amino-acid biosynthesis; L-isoleucine biosynthesis; L-isoleucine from 2-oxobutanoate: step 2/4. Its pathway is amino-acid biosynthesis; L-valine biosynthesis; L-valine from pyruvate: step 2/4. Involved in the biosynthesis of branched-chain amino acids (BCAA). Catalyzes an alkyl-migration followed by a ketol-acid reduction of (S)-2-acetolactate (S2AL) to yield (R)-2,3-dihydroxy-isovalerate. In the isomerase reaction, S2AL is rearranged via a Mg-dependent methyl migration to produce 3-hydroxy-3-methyl-2-ketobutyrate (HMKB). In the reductase reaction, this 2-ketoacid undergoes a metal-dependent reduction by NADPH to yield (R)-2,3-dihydroxy-isovalerate. In Deinococcus geothermalis (strain DSM 11300 / CIP 105573 / AG-3a), this protein is Ketol-acid reductoisomerase (NADP(+)).